We begin with the raw amino-acid sequence, 171 residues long: Protein-export protein SecB (171 aa).

The protein belongs to the SecB family. In terms of assembly, homotetramer, a dimer of dimers. One homotetramer interacts with 1 SecA dimer.

The protein localises to the cytoplasm. In terms of biological role, one of the proteins required for the normal export of preproteins out of the cell cytoplasm. It is a molecular chaperone that binds to a subset of precursor proteins, maintaining them in a translocation-competent state. It also specifically binds to its receptor SecA. In Gluconacetobacter diazotrophicus (strain ATCC 49037 / DSM 5601 / CCUG 37298 / CIP 103539 / LMG 7603 / PAl5), this protein is Protein-export protein SecB.